The sequence spans 95 residues: Osteocalcin 1 (95 aa).

The first 21 residues, 1–21 (MKTLSVLVLCSLAVLCLTSDA), serve as a signal peptide directing secretion. A propeptide spanning residues 22-50 (SFSSQPAVDTPAQEGLFVEQEQASSVVRQ) is cleaved from the precursor. Residues 45–91 (SSVVRQAPKELSLSQLESLREVCELNLACEDMMDTSGIIAAYTTYYG) enclose the Gla domain. Residues Glu-61, Glu-65, and Glu-68 each coordinate Ca(2+). Glu-61, Glu-65, and Glu-68 each carry 4-carboxyglutamate. A disulfide bridge links Cys-67 with Cys-73.

This sequence belongs to the osteocalcin/matrix Gla protein family. Gamma-carboxyglutamate residues are formed by vitamin K dependent carboxylation by GGCX. These residues are essential for the binding of calcium.

Its subcellular location is the secreted. Functionally, the carboxylated form is one of the main organic components of the bone matrix, which constitutes 1-2% of the total bone protein. The carboxylated form binds strongly to apatite and calcium. The sequence is that of Osteocalcin 1 from Solea senegalensis (Senegalese sole).